The sequence spans 264 residues: MNQVTESAVQFDVVTLFPEMFRALTDWGITSRAVKQGRFGLRTWNPRDFTTDNYRTVDDRPYGGGPGMVMLARPLEAAIDAAKAAQAEQGIASTRVVMMSPQGAPLTHDRAVRMAQEPGVVVLCGRYEAIDQRLLDRCVDEEISLGDFVLSGGELPAMAMMDAVVRLLPGVLNDSLSAVQDSFADGLLDCPHYTRPEEYDGVRVPDVLLGGHHAEIEKWRRQEALRNTLRKRPDLIVRARREKLLSRADEAWLANLAREAKDAS.

S-adenosyl-L-methionine-binding positions include glycine 125 and 145–150 (LGDFVL).

Belongs to the RNA methyltransferase TrmD family. In terms of assembly, homodimer.

The protein resides in the cytoplasm. It catalyses the reaction guanosine(37) in tRNA + S-adenosyl-L-methionine = N(1)-methylguanosine(37) in tRNA + S-adenosyl-L-homocysteine + H(+). Specifically methylates guanosine-37 in various tRNAs. In Burkholderia cenocepacia (strain HI2424), this protein is tRNA (guanine-N(1)-)-methyltransferase.